Here is a 594-residue protein sequence, read N- to C-terminus: UvrABC system protein C (594 aa).

In terms of domain architecture, GIY-YIG spans 14 to 91; it reads DQPGCYLMKD…IKKHDPKYNI (78 aa). In terms of domain architecture, UVR spans 196–231; sequence KEVRSELETKMYEASEKLEFERAKELRDQIAHIDAI.

It belongs to the UvrC family. Interacts with UvrB in an incision complex.

Its subcellular location is the cytoplasm. In terms of biological role, the UvrABC repair system catalyzes the recognition and processing of DNA lesions. UvrC both incises the 5' and 3' sides of the lesion. The N-terminal half is responsible for the 3' incision and the C-terminal half is responsible for the 5' incision. The polypeptide is UvrABC system protein C (Bacillus thuringiensis (strain Al Hakam)).